The sequence spans 244 residues: N-(5'-phosphoribosyl)anthranilate isomerase 3, chloroplastic (244 aa).

The transit peptide at 1-32 directs the protein to the chloroplast; sequence MSTGISSDLHLHPRALNFSKTSKSGLSNRKVS.

This sequence belongs to the TrpF family.

The protein resides in the plastid. The protein localises to the chloroplast. The catalysed reaction is N-(5-phospho-beta-D-ribosyl)anthranilate = 1-(2-carboxyphenylamino)-1-deoxy-D-ribulose 5-phosphate. Its pathway is amino-acid biosynthesis; L-tryptophan biosynthesis; L-tryptophan from chorismate: step 3/5. The chain is N-(5'-phosphoribosyl)anthranilate isomerase 3, chloroplastic (PAI3) from Arabidopsis thaliana (Mouse-ear cress).